Consider the following 387-residue polypeptide: Alpha-sarcoglycan (387 aa).

The first 23 residues, 1–23 (MAETLFWTPLLVVLLAGLGDTEA), serve as a signal peptide directing secretion. The Extracellular segment spans residues 24–290 (QQTTLHPLVG…APDRDFLVDA (267 aa)). N-linked (GlcNAc...) asparagine glycosylation is found at asparagine 174 and asparagine 246. Residues 291–311 (LVTLLVPLLVALLLTLLLAYV) traverse the membrane as a helical segment. Residues 312–387 (MCCRREGRLK…AQVPLILDQH (76 aa)) lie on the Cytoplasmic side of the membrane. Position 377 is a phosphoserine (serine 377).

It belongs to the sarcoglycan alpha/epsilon family. Interacts with the syntrophin SNTA1. Cross-link to form 2 major subcomplexes: one consisting of SGCB, SGCD and SGCG and the other consisting of SGCB and SGCD. The association between SGCB and SGCG is particularly strong while SGCA is loosely associated with the other sarcoglycans. Most strongly expressed in skeletal muscle. Also expressed in cardiac muscle and, at much lower levels, in lung. In the fetus, most abundant in cardiac muscle and, at lower levels, in lung. Also detected in liver and kidney. Not expressed in brain.

It is found in the cell membrane. The protein resides in the sarcolemma. The protein localises to the cytoplasm. Its subcellular location is the cytoskeleton. Component of the sarcoglycan complex, a subcomplex of the dystrophin-glycoprotein complex which forms a link between the F-actin cytoskeleton and the extracellular matrix. The protein is Alpha-sarcoglycan (SGCA) of Homo sapiens (Human).